The primary structure comprises 188 residues: ATP-dependent protease subunit HslV (188 aa).

T8 is an active-site residue. Na(+) contacts are provided by A165, C168, and T171.

It belongs to the peptidase T1B family. HslV subfamily. As to quaternary structure, a double ring-shaped homohexamer of HslV is capped on each side by a ring-shaped HslU homohexamer. The assembly of the HslU/HslV complex is dependent on binding of ATP.

The protein localises to the cytoplasm. The enzyme catalyses ATP-dependent cleavage of peptide bonds with broad specificity.. Its activity is regulated as follows. Allosterically activated by HslU binding. Functionally, protease subunit of a proteasome-like degradation complex believed to be a general protein degrading machinery. The chain is ATP-dependent protease subunit HslV from Neorickettsia sennetsu (strain ATCC VR-367 / Miyayama) (Ehrlichia sennetsu).